A 651-amino-acid chain; its full sequence is Acetyl-coenzyme A synthetase (651 aa).

CoA is bound by residues 191–194 (RGGK), Thr311, and Asn335. Residues 387 to 389 (GEP), 411 to 416 (DTWWQT), Asp500, and Arg515 contribute to the ATP site. Ser523 contacts CoA. ATP is bound at residue Arg526. Mg(2+) is bound by residues Val537, His539, and Val542. Arg584 lines the CoA pocket. Lys609 carries the post-translational modification N6-acetyllysine.

It belongs to the ATP-dependent AMP-binding enzyme family. The cofactor is Mg(2+). Post-translationally, acetylated. Deacetylation by the SIR2-homolog deacetylase activates the enzyme.

The enzyme catalyses acetate + ATP + CoA = acetyl-CoA + AMP + diphosphate. In terms of biological role, catalyzes the conversion of acetate into acetyl-CoA (AcCoA), an essential intermediate at the junction of anabolic and catabolic pathways. AcsA undergoes a two-step reaction. In the first half reaction, AcsA combines acetate with ATP to form acetyl-adenylate (AcAMP) intermediate. In the second half reaction, it can then transfer the acetyl group from AcAMP to the sulfhydryl group of CoA, forming the product AcCoA. The protein is Acetyl-coenzyme A synthetase of Pseudomonas savastanoi pv. phaseolicola (strain 1448A / Race 6) (Pseudomonas syringae pv. phaseolicola (strain 1448A / Race 6)).